Here is a 328-residue protein sequence, read N- to C-terminus: B3 domain-containing protein At5g60140 (328 aa).

The TF-B3 DNA-binding region spans 13–109 (SKFFKPYLPS…FFNFSIFDHE (97 aa)). Residues 145 to 221 (LNSDDSDDSD…EDEDDLEDED (77 aa)) are disordered. Acidic residues-rich tracts occupy residues 148-182 (DDSD…AEDG) and 190-221 (GLED…EDED).

It is found in the nucleus. This is B3 domain-containing protein At5g60140 from Arabidopsis thaliana (Mouse-ear cress).